The following is a 506-amino-acid chain: Transcription factor CP2 (506 aa).

A Grh/CP2 DB domain is found at 61 to 300 (ENKILPFQYV…SPGFNSSHNS (240 aa)). The segment at 133-395 (EHQQLEGWRW…LFNALKGRIV (263 aa)) is DNA-binding. 2 disordered regions span residues 238–268 (FKPK…YQPS) and 291–316 (SPGF…QPEP). Basic and acidic residues predominate over residues 241–265 (KGADRKQKTDREKMEKRTPQEKEKY). Residues 291–300 (SPGFNSSHNS) show a composition bias toward polar residues.

It belongs to the grh/CP2 family. CP2 subfamily. As to quaternary structure, component of the SSP (stage selector protein) complex, which appears to be a heteromer of TFCP2 and 2 copies of NFE4.

The protein resides in the nucleus. In terms of biological role, may function as a transcription factor. In Xenopus laevis (African clawed frog), this protein is Transcription factor CP2 (tfcp2).